We begin with the raw amino-acid sequence, 836 residues long: MGLLSAVFGTYSEREVKRIRPIVSKINELDEVMQKLSDDELKAKTVEFKERLNNGETVDDILPEAFAVVREASKRVLNMKHYDEQLIGGIVLHQGRIAEMKTGEGKTLVATLPAYLNGLTGKGVHIITVNDYLAKRDAEQMGELYGFLGLTTGVIVHELTNEQRREAYNSDITYGTNNEFGFDYLRDNMVIYKEERVQRKLNFTIVDEVDSILIDEARTPLIISGQGEKSTEFYKVADYFVKTLVKEKDYTIDEKANAVMLTDEGFHKAEQTFKVENYADAENVELQHYVTQALKANYAMRRDKDYMVKDGEVIIVDEFTGRLMEGRRYSDGLHQAIEAKENVKIARESKTLATITFQNYFRMYEKLSGMTGTALTEENEFREIYGLDVIVVPTHKPVVRIDNPDLVFKSEKGKIMAVVDEIAKAHEVGQPVLVGTVSIEKSELISSMLKKKGVPHQVLNAKFHEQEAEIITHAGEKGMVTIATNMAGRGTDIKLGEGVLEIGGLKIIGTERHESRRIDNQLRGRSGRQGDSGESTFFISLEDDLMRIFGSEKIQGVVEKLGLEEDEAIESKLVSKSIENAQKKVEGNNFDIRKTLLGYDDVMNKQREVIYKQRAEVLEGEDVKEEILHMLRDVISDAVDTHIKEDAEDYRESFLYLISYLNDICIPTNEVNLPALTEMSKEEIIDHLYDVAVKSYEDKEAEFTSERLREIERVVLLRSVDTKWMDHINNMDNLKQGIGLRAFKQVDPVQAYQMEGSAMFEEMIDSIKKETVKMLLHVKVERAPERVRVAQETNAVHGDKPSAPVGPVRNLNKFGRNDVCPCGSGKKFKNCCGREA.

ATP contacts are provided by residues Gln85, 103–107 (GEGKT), and Asp492. 4 residues coordinate Zn(2+): Cys820, Cys822, Cys831, and Cys832.

This sequence belongs to the SecA family. As to quaternary structure, monomer and homodimer. Part of the essential Sec protein translocation apparatus which comprises SecA, SecYEG and auxiliary proteins SecDF. Other proteins may also be involved. Zn(2+) serves as cofactor.

The protein resides in the cell membrane. The protein localises to the cytoplasm. It carries out the reaction ATP + H2O + cellular proteinSide 1 = ADP + phosphate + cellular proteinSide 2.. Functionally, part of the Sec protein translocase complex. Interacts with the SecYEG preprotein conducting channel. Has a central role in coupling the hydrolysis of ATP to the transfer of proteins into and across the cell membrane, serving as an ATP-driven molecular motor driving the stepwise translocation of polypeptide chains across the membrane. This Clostridium botulinum (strain Eklund 17B / Type B) protein is Protein translocase subunit SecA.